The chain runs to 340 residues: Protein-arginine kinase (340 aa).

The Phosphagen kinase C-terminal domain occupies 21–242 (VVLSSRIRLA…EQIIMQERIA (222 aa)). Residues 24-28 (SSRIR), histidine 79, arginine 113, 164-168 (RASVM), and 195-200 (RGIYGE) each bind ATP.

Belongs to the ATP:guanido phosphotransferase family.

It carries out the reaction L-arginyl-[protein] + ATP = N(omega)-phospho-L-arginyl-[protein] + ADP + H(+). Its function is as follows. Catalyzes the specific phosphorylation of arginine residues in proteins. This chain is Protein-arginine kinase, found in Listeria monocytogenes serotype 4a (strain HCC23).